The following is a 211-amino-acid chain: Protein FAM167A (211 aa).

Disordered regions lie at residues 1-30 (MSVPQIQVEEVAGGEEGPAGTTPPPDDHLR) and 56-108 (EEQT…GKLE). Residues 120-153 (LRKELMEMRLQDQQLARQLMRLRSDIHKLKIEQT) are a coiled coil.

The protein belongs to the FAM167 (SEC) family.

This chain is Protein FAM167A (FAM167A), found in Bos taurus (Bovine).